The primary structure comprises 386 residues: Leupaxin (386 aa).

Position 1 is an N-acetylmethionine (methionine 1). An LD motif 1 motif is present at residues 3-15; it reads ELDALLEELERCT. Serine 19 carries the post-translational modification Phosphoserine. The disordered stretch occupies residues 19–52; the sequence is SEEYSNPVSCHLDQQSTEESKIPQTPKTLSSQGN. The residue at position 22 (tyrosine 22) is a Phosphotyrosine. Residues 22–52 show a composition bias toward polar residues; sequence YSNPVSCHLDQQSTEESKIPQTPKTLSSQGN. Phosphoserine is present on serine 54. Residue tyrosine 62 is modified to Phosphotyrosine. 2 consecutive short sequence motifs (LD motif) follow at residues 70 to 82 and 92 to 103; these read NVYS…KESV and QLDELMAHLSEM. Tyrosine 72 carries the post-translational modification Phosphotyrosine; by LYN. Phosphoserine is present on serine 81. LIM zinc-binding domains follow at residues 150-208, 209-267, 268-326, and 327-386; these read GYCA…RLFS, PRCA…AMFS, PKCG…HRRG, and TLCH…LFSQ.

Belongs to the paxillin family. In terms of assembly, interacts with unphosphorylated ITGA4. Interacts with AR and SRF. Interacts with PTK2B/PYK2, PTPN22 and PTPN12. Interacts (via LD motif 3) with LYN and the interaction is induced upon B-cell antigen receptor (BCR) activation. Interacts (via LD motif 3) with PTK2/FAK. In terms of processing, phosphorylated on tyrosine residues. Phosphorylation on Tyr-72 is important for its inhibitory function. Bombesin stimulates phosphorylation on Tyr-22, Tyr-62 and Tyr-72. In terms of tissue distribution, expressed in osteoclasts (at protein level). Highly expressed in vascular smooth muscle.

The protein resides in the cytoplasm. It localises to the cell junction. It is found in the focal adhesion. The protein localises to the nucleus. Its subcellular location is the perinuclear region. The protein resides in the cell projection. It localises to the podosome. It is found in the cell membrane. In terms of biological role, transcriptional coactivator for androgen receptor (AR) and serum response factor (SRF). Contributes to the regulation of cell adhesion, spreading and cell migration and acts as a negative regulator in integrin-mediated cell adhesion events. Suppresses the integrin-induced tyrosine phosphorylation of paxillin (PXN). May play a critical role as an adapter protein in the formation of the adhesion zone in osteoclasts. Negatively regulates B-cell antigen receptor (BCR) signaling. This Mus musculus (Mouse) protein is Leupaxin (Lpxn).